We begin with the raw amino-acid sequence, 227 residues long: Esterase OVCA2 (227 aa).

Active-site charge relay system residues include Ser-119, Asp-179, and His-206.

The protein belongs to the LovG family.

The enzyme catalyses a carboxylic ester + H2O = an alcohol + a carboxylate + H(+). Its function is as follows. Exhibits ester hydrolase activity with a strong preference for long-chain alkyl ester substrates and high selectivity against a variety of short, branched, and substituted esters. Is able to hydrolyze ester bonds within a wide range of p-nitrophenyl derivatives (C2-C14) in vitro, with a strong preference toward substrates of &gt;8 carbons. This Bos taurus (Bovine) protein is Esterase OVCA2 (OVCA2).